The primary structure comprises 124 residues: Histone H2A (124 aa).

Over residues 1–18 the composition is skewed to basic residues; it reads MSGRGKGGKVKGKAKSRS. Residues 1–21 are disordered; sequence MSGRGKGGKVKGKAKSRSNRA. Position 2 is an N-acetylserine (serine 2). Phosphoserine is present on serine 2. At lysine 36 the chain carries N6-succinyllysine. N5-methylglutamine is present on glutamine 104. A Glycyl lysine isopeptide (Lys-Gly) (interchain with G-Cter in ubiquitin) cross-link involves residue lysine 119. Threonine 120 carries the post-translational modification Phosphothreonine.

It belongs to the histone H2A family. In terms of assembly, the nucleosome is a histone octamer containing two molecules each of H2A, H2B, H3 and H4 assembled in one H3-H4 heterotetramer and two H2A-H2B heterodimers. The octamer wraps approximately 147 bp of DNA. The chromatin-associated form, but not the free cytoplasmic form, is phosphorylated on Thr-120 by NHK-1 during mitosis, and dephosphorylated during S-phase. Also phosphorylated on Thr-120 by NHK-1 during prophase I of meiosis; which is required for acetylation of H3 'Lys-14' and H4 'Lys-5', diassembly of the synaptonemal complex, and karyosome formation. In terms of processing, monoubiquitination of Lys-119 by sce/dRING gives a specific tag for epigenetic transcriptional repression. Post-translationally, phosphorylation on Ser-2 is enhanced during mitosis. Phosphorylation on Ser-2 directly represses transcription.

It is found in the nucleus. The protein localises to the chromosome. Its function is as follows. Core component of nucleosome. Nucleosomes wrap and compact DNA into chromatin, limiting DNA accessibility to the cellular machineries which require DNA as a template. Histones thereby play a central role in transcription regulation, DNA repair, DNA replication and chromosomal stability. DNA accessibility is regulated via a complex set of post-translational modifications of histones, also called histone code, and nucleosome remodeling. This Drosophila erecta (Fruit fly) protein is Histone H2A (His2A).